The following is a 521-amino-acid chain: Maturase K (521 aa).

Belongs to the intron maturase 2 family. MatK subfamily.

The protein resides in the plastid. It is found in the chloroplast. Usually encoded in the trnK tRNA gene intron. Probably assists in splicing its own and other chloroplast group II introns. The protein is Maturase K of Kniphofia uvaria (Red-hot poker).